Consider the following 210-residue polypeptide: Large ribosomal subunit protein uL4 (210 aa).

A compositionally biased stretch (polar residues) spans 44–54 (QRQGTASTLTR). A disordered region spans residues 44 to 96 (QRQGTASTLTRSEVRGGGRKPYKQKGTGRARQGSIRTPLRPGGGVIFGPKPRS). Over residues 60–71 (GGRKPYKQKGTG) the composition is skewed to basic residues.

Belongs to the universal ribosomal protein uL4 family. Part of the 50S ribosomal subunit.

One of the primary rRNA binding proteins, this protein initially binds near the 5'-end of the 23S rRNA. It is important during the early stages of 50S assembly. It makes multiple contacts with different domains of the 23S rRNA in the assembled 50S subunit and ribosome. In terms of biological role, forms part of the polypeptide exit tunnel. This is Large ribosomal subunit protein uL4 from Prochlorococcus marinus (strain MIT 9515).